The following is a 489-amino-acid chain: Trehalose-6-phosphate synthase (489 aa).

R22 provides a ligand contact to D-glucose 6-phosphate. 42 to 43 (GG) provides a ligand contact to UDP-alpha-D-glucose. D-glucose 6-phosphate is bound by residues Y94 and D148. UDP-alpha-D-glucose-binding residues include R290 and K295. R328 provides a ligand contact to D-glucose 6-phosphate. 393–397 (LVAKE) contacts UDP-alpha-D-glucose.

Belongs to the glycosyltransferase 20 family. In terms of assembly, homotetramer.

It carries out the reaction ADP-alpha-D-glucose + D-glucose 6-phosphate = alpha,alpha-trehalose 6-phosphate + ADP + H(+). The enzyme catalyses CDP-alpha-D-glucose + D-glucose 6-phosphate = alpha,alpha-trehalose 6-phosphate + CDP + H(+). The catalysed reaction is GDP-alpha-D-glucose + D-glucose 6-phosphate = alpha,alpha-trehalose 6-phosphate + GDP + H(+). It catalyses the reaction TDP-alpha-D-glucose + D-glucose 6-phosphate = 5-methyl-UDP + alpha,alpha-trehalose 6-phosphate + H(+). It carries out the reaction D-glucose 6-phosphate + UDP-alpha-D-glucose = alpha,alpha-trehalose 6-phosphate + UDP + H(+). Its pathway is glycan biosynthesis; trehalose biosynthesis. Probably involved in the osmoprotection via the biosynthesis of trehalose and in the production of glycogen and alpha-glucan via the TreS-Pep2 branch involved in the biosynthesis of maltose-1-phosphate (M1P). Catalyzes the transfer of glucose from UDP-glucose (UDP-Glc) to D-glucose 6-phosphate (Glc-6-P) to form trehalose-6-phosphate. Probably also able to use ADP-Glc, CDP-Glc, GDP-Glc and TDP-Glc as glucosyl donors. This is Trehalose-6-phosphate synthase from Mycobacterium sp. (strain KMS).